Here is a 107-residue protein sequence, read N- to C-terminus: Nucleoid-associated protein YaaK (107 aa).

The tract at residues 1 to 24 is disordered; the sequence is MRGGMGNMQKMMKQMQKMQKDMAK. Residues 8 to 17 are compositionally biased toward low complexity; that stretch reads MQKMMKQMQK.

The protein belongs to the YbaB/EbfC family. Homodimer.

Its subcellular location is the cytoplasm. It localises to the nucleoid. Its function is as follows. Binds to DNA and alters its conformation. May be involved in regulation of gene expression, nucleoid organization and DNA protection. The protein is Nucleoid-associated protein YaaK (yaaK) of Bacillus subtilis (strain 168).